A 242-amino-acid polypeptide reads, in one-letter code: Biosynthetic peptidoglycan transglycosylase (242 aa).

Residues 19 to 39 traverse the membrane as a helical segment; sequence LMVVLAVFWGGGIALFSVAPV.

It belongs to the glycosyltransferase 51 family.

The protein resides in the cell inner membrane. It catalyses the reaction [GlcNAc-(1-&gt;4)-Mur2Ac(oyl-L-Ala-gamma-D-Glu-L-Lys-D-Ala-D-Ala)](n)-di-trans,octa-cis-undecaprenyl diphosphate + beta-D-GlcNAc-(1-&gt;4)-Mur2Ac(oyl-L-Ala-gamma-D-Glu-L-Lys-D-Ala-D-Ala)-di-trans,octa-cis-undecaprenyl diphosphate = [GlcNAc-(1-&gt;4)-Mur2Ac(oyl-L-Ala-gamma-D-Glu-L-Lys-D-Ala-D-Ala)](n+1)-di-trans,octa-cis-undecaprenyl diphosphate + di-trans,octa-cis-undecaprenyl diphosphate + H(+). It participates in cell wall biogenesis; peptidoglycan biosynthesis. Its function is as follows. Peptidoglycan polymerase that catalyzes glycan chain elongation from lipid-linked precursors. In Escherichia coli O17:K52:H18 (strain UMN026 / ExPEC), this protein is Biosynthetic peptidoglycan transglycosylase.